A 375-amino-acid chain; its full sequence is Dual specificity protein phosphatase 4 (375 aa).

Residues 25-143 enclose the Rhodanese domain; that stretch reads SGGRCLLLDC…FASEYPEFCA (119 aa). In terms of domain architecture, Tyrosine-protein phosphatase spans 176–317; it reads GPVEILPFLY…LLQFESQVLA (142 aa). Residue Cys261 is the Phosphocysteine intermediate of the active site.

This sequence belongs to the protein-tyrosine phosphatase family. Non-receptor class dual specificity subfamily.

The protein localises to the nucleus. The enzyme catalyses O-phospho-L-tyrosyl-[protein] + H2O = L-tyrosyl-[protein] + phosphate. The catalysed reaction is O-phospho-L-seryl-[protein] + H2O = L-seryl-[protein] + phosphate. It carries out the reaction O-phospho-L-threonyl-[protein] + H2O = L-threonyl-[protein] + phosphate. Its function is as follows. Regulates mitogenic signal transduction by dephosphorylating both Thr and Tyr residues on MAP kinases ERK1 and ERK2. This chain is Dual specificity protein phosphatase 4 (DUSP4), found in Gallus gallus (Chicken).